The sequence spans 1542 residues: Pleiotropic ABC efflux transporter of multiple drugs PDH1 (1542 aa).

The span at 1–14 (MNTPDDSSVSSVDS) shows a compositional bias: low complexity. Positions 1–61 (MNTPDDSSVS…APADGSAPLD (61 aa)) are disordered. Topologically, residues 1-517 (MNTPDDSSVS…LIRNFWRIKN (517 aa)) are cytoplasmic. Positions 24 to 33 (NVEKRIRELA) are enriched in basic and acidic residues. A compositionally biased stretch (polar residues) spans 35–47 (SLTQQSLTSSNRS). Residues 153–409 (VKLLNAVWRK…FQKMGYFCPK (257 aa)) enclose the ABC transporter 1 domain. Transmembrane regions (helical) follow at residues 518–540 (SASV…GSMF), 552–574 (FYFR…LLEI), 603–625 (VISE…YFLV), 634–652 (FFFY…SHLF), 662–684 (LQEA…GFAI), and 773–792 (GFGV…LILC). Over 793-1220 (EFNEGAKQKG…LFQQYWRTPD (428 aa)) the chain is Cytoplasmic. Positions 825 to 834 (TKMHTDKNDI) are enriched in basic and acidic residues. The interval 825–846 (TKMHTDKNDIENNSESITSNAT) is disordered. Positions 835–846 (ENNSESITSNAT) are enriched in polar residues. One can recognise an ABC transporter 2 domain in the interval 885-1128 (FHWQNLCYDV…MIKYFEDHGA (244 aa)). 921 to 928 (GASGAGKT) is an ATP binding site. 6 consecutive transmembrane segments (helical) span residues 1221 to 1241 (YLWS…FTFF), 1256 to 1276 (SIFM…PTFV), 1296 to 1316 (AFIL…GTLA), 1342 to 1362 (LFWL…LFVI), 1370 to 1390 (TAAH…GVMA), and 1495 to 1515 (GIFI…YWLA). Residues 1516 to 1542 (RVPKTNGKIAKNGKTAKVNFIRRLIPF) are Cytoplasmic-facing.

It belongs to the ABC transporter superfamily. ABCG family. PDR (TC 3.A.1.205) subfamily. In terms of processing, phosphorylated by PKA. Dephosphorylated on glucose depletion and independently rephosphorylated during glucose exposure or under stress.

It localises to the cell membrane. In terms of biological role, pleiotropic ABC efflux transporter that confers resistance to structurally and functionally unrelated compounds including caspofungin or azoles such as fluconazole, itraconazole, posaconazole, voriconazole, and isavuconazole. Does not play a role in the azole resistance in mature biofilms. The protein is Pleiotropic ABC efflux transporter of multiple drugs PDH1 of Candida glabrata (strain ATCC 2001 / BCRC 20586 / JCM 3761 / NBRC 0622 / NRRL Y-65 / CBS 138) (Yeast).